The sequence spans 233 residues: 5'-methylthioadenosine/S-adenosylhomocysteine nucleosidase (233 aa).

Glutamate 12 acts as the Proton acceptor in catalysis. Substrate is bound by residues glycine 78, isoleucine 156, and 177-178; that span reads ME. Aspartate 201 serves as the catalytic Proton donor.

This sequence belongs to the PNP/UDP phosphorylase family. MtnN subfamily.

The catalysed reaction is S-adenosyl-L-homocysteine + H2O = S-(5-deoxy-D-ribos-5-yl)-L-homocysteine + adenine. It catalyses the reaction S-methyl-5'-thioadenosine + H2O = 5-(methylsulfanyl)-D-ribose + adenine. It carries out the reaction 5'-deoxyadenosine + H2O = 5-deoxy-D-ribose + adenine. Its pathway is amino-acid biosynthesis; L-methionine biosynthesis via salvage pathway; S-methyl-5-thio-alpha-D-ribose 1-phosphate from S-methyl-5'-thioadenosine (hydrolase route): step 1/2. Catalyzes the irreversible cleavage of the glycosidic bond in both 5'-methylthioadenosine (MTA) and S-adenosylhomocysteine (SAH/AdoHcy) to adenine and the corresponding thioribose, 5'-methylthioribose and S-ribosylhomocysteine, respectively. Also cleaves 5'-deoxyadenosine, a toxic by-product of radical S-adenosylmethionine (SAM) enzymes, into 5-deoxyribose and adenine. The polypeptide is 5'-methylthioadenosine/S-adenosylhomocysteine nucleosidase (Listeria innocua serovar 6a (strain ATCC BAA-680 / CLIP 11262)).